Here is a 351-residue protein sequence, read N- to C-terminus: Photosystem II D2 protein (351 aa).

The chain crosses the membrane as a helical span at residues C39–T59. H116 is a binding site for chlorophyll a. The helical transmembrane segment at G123–P139 threads the bilayer. Positions 128 and 141 each coordinate pheophytin a. A helical membrane pass occupies residues V151–A164. Chlorophyll a is bound at residue H196. Residues G206–E226 traverse the membrane as a helical segment. A plastoquinone-binding residues include H213 and F260. H213 contacts Fe cation. Fe cation is bound at residue H267. The helical transmembrane segment at G277 to R293 threads the bilayer.

It belongs to the reaction center PufL/M/PsbA/D family. As to quaternary structure, PSII is composed of 1 copy each of membrane proteins PsbA, PsbB, PsbC, PsbD, PsbE, PsbF, PsbH, PsbI, PsbJ, PsbK, PsbL, PsbM, PsbT, PsbX, PsbY, PsbZ, Psb30/Ycf12, at least 3 peripheral proteins of the oxygen-evolving complex and a large number of cofactors. It forms dimeric complexes. It depends on The D1/D2 heterodimer binds P680, chlorophylls that are the primary electron donor of PSII, and subsequent electron acceptors. It shares a non-heme iron and each subunit binds pheophytin, quinone, additional chlorophylls, carotenoids and lipids. There is also a Cl(-1) ion associated with D1 and D2, which is required for oxygen evolution. The PSII complex binds additional chlorophylls, carotenoids and specific lipids. as a cofactor.

Its subcellular location is the plastid. It localises to the chloroplast thylakoid membrane. The catalysed reaction is 2 a plastoquinone + 4 hnu + 2 H2O = 2 a plastoquinol + O2. In terms of biological role, photosystem II (PSII) is a light-driven water:plastoquinone oxidoreductase that uses light energy to abstract electrons from H(2)O, generating O(2) and a proton gradient subsequently used for ATP formation. It consists of a core antenna complex that captures photons, and an electron transfer chain that converts photonic excitation into a charge separation. The D1/D2 (PsbA/PsbD) reaction center heterodimer binds P680, the primary electron donor of PSII as well as several subsequent electron acceptors. D2 is needed for assembly of a stable PSII complex. The chain is Photosystem II D2 protein from Cyanidioschyzon merolae (strain NIES-3377 / 10D) (Unicellular red alga).